Reading from the N-terminus, the 690-residue chain is Probable serine/threonine-protein kinase PknB (690 aa).

The Protein kinase domain maps to 14–285 (YQLGQLIGRG…EFKTDILTYM (272 aa)). Residues 20 to 28 (IGRGGMAEV) and Lys-43 contribute to the ATP site. Asp-146 acts as the Proton acceptor in catalysis. PASTA domains lie at 399 to 467 (SEDT…WFSA), 468 to 536 (GPQS…YVSS), 540 to 601 (TVPS…WVST), and 602 to 666 (GKEK…TTKA). The disordered stretch occupies residues 429 to 453 (MTEKQDTDSTEPEGTCTKMSPDAGS). A disordered region spans residues 665-690 (KAGSTGGGTGTGDGGNGTGNGGGTGE). The segment covering 668–690 (STGGGTGTGDGGNGTGNGGGTGE) has biased composition (gly residues).

The protein belongs to the protein kinase superfamily. Ser/Thr protein kinase family.

The enzyme catalyses L-seryl-[protein] + ATP = O-phospho-L-seryl-[protein] + ADP + H(+). It carries out the reaction L-threonyl-[protein] + ATP = O-phospho-L-threonyl-[protein] + ADP + H(+). This Bifidobacterium longum (strain NCC 2705) protein is Probable serine/threonine-protein kinase PknB (pknB).